We begin with the raw amino-acid sequence, 670 residues long: MTTDYFTRKQSYSGFSDGADSPGSPLASRTNPLSSKVTSVLSASYADSDIRDALSLLDKRGIQNTAETRRQLRLDVHREVIESNGDIIREFGHVAEEASELMKQQEQMQAKQELLNAFNAHFVMSDDDIAMLTSTAEPVNDRFFSILSRAKKIQNDCEILLGTENQRLGLEIMEQTSKNINGAFQKLYRWIQREFKTLNLENPQISSSIRRALRVLAERPSLFQSCLDFFAEARENILSDGFYTALTGTTVGGDEDPSIKPIELVAHDPLRYVGDMLAWTHSATVGEREALEVLFISDGDEIAKGIQAGLDSEPWNRIAESEDEVGHFDGLKALNELVDRDVAGVARVLRQKIGQVIQSHEETIMAYKIANLLNFYRGTFQRLLGDDSVLLDSLATLEESALRQFRALMRDHITSLQAETQVAPPNLSPPDFLHEGLKQLTAIMKTYETSFTSPETREAGFEPILTEAFDPFMKGSENVAKDLSAPRSTIFTINCLLSARATLAPFDFTISRVSQIKDTIEEHAATLIDHQYIFFLEKSALQPLLQALSATTDIRDHPVFQPASLIQASQTLDDFLPSALMDAMENLKDLQNSMLVRQITEEAAEKFCDDFEKVEERLMKADEEREESLDEKDGEPHHVRALYPRTGGEIRVLLSIRIWNMFKTWRLEIT.

The segment covering 1–14 (MTTDYFTRKQSYSG) has biased composition (polar residues). The interval 1-32 (MTTDYFTRKQSYSGFSDGADSPGSPLASRTNP) is disordered.

Belongs to the COG6 family.

The protein resides in the golgi apparatus membrane. Acts as a component of the peripheral membrane COG complex that is involved in intra-Golgi protein trafficking. COG is located at the cis-Golgi, and regulates tethering of retrograde intra-Golgi vesicles and possibly a number of other membrane trafficking events. The protein is Conserved oligomeric Golgi complex subunit 6 (COG6) of Sclerotinia sclerotiorum (strain ATCC 18683 / 1980 / Ss-1) (White mold).